The chain runs to 581 residues: Proline--tRNA ligase (581 aa).

It belongs to the class-II aminoacyl-tRNA synthetase family. ProS type 1 subfamily. As to quaternary structure, homodimer.

It is found in the cytoplasm. The enzyme catalyses tRNA(Pro) + L-proline + ATP = L-prolyl-tRNA(Pro) + AMP + diphosphate. Catalyzes the attachment of proline to tRNA(Pro) in a two-step reaction: proline is first activated by ATP to form Pro-AMP and then transferred to the acceptor end of tRNA(Pro). As ProRS can inadvertently accommodate and process non-cognate amino acids such as alanine and cysteine, to avoid such errors it has two additional distinct editing activities against alanine. One activity is designated as 'pretransfer' editing and involves the tRNA(Pro)-independent hydrolysis of activated Ala-AMP. The other activity is designated 'posttransfer' editing and involves deacylation of mischarged Ala-tRNA(Pro). The misacylated Cys-tRNA(Pro) is not edited by ProRS. The protein is Proline--tRNA ligase of Chlamydia trachomatis serovar D (strain ATCC VR-885 / DSM 19411 / UW-3/Cx).